We begin with the raw amino-acid sequence, 954 residues long: Glycine dehydrogenase (decarboxylating) (954 aa).

Lys706 is subject to N6-(pyridoxal phosphate)lysine.

Belongs to the GcvP family. In terms of assembly, the glycine cleavage system is composed of four proteins: P, T, L and H. Pyridoxal 5'-phosphate serves as cofactor.

It carries out the reaction N(6)-[(R)-lipoyl]-L-lysyl-[glycine-cleavage complex H protein] + glycine + H(+) = N(6)-[(R)-S(8)-aminomethyldihydrolipoyl]-L-lysyl-[glycine-cleavage complex H protein] + CO2. Functionally, the glycine cleavage system catalyzes the degradation of glycine. The P protein binds the alpha-amino group of glycine through its pyridoxal phosphate cofactor; CO(2) is released and the remaining methylamine moiety is then transferred to the lipoamide cofactor of the H protein. This Pseudomonas syringae pv. tomato (strain ATCC BAA-871 / DC3000) protein is Glycine dehydrogenase (decarboxylating).